The primary structure comprises 393 residues: MDAATLTYDTLRFAEFEDFPETSEPVWILGRKYSIFTEKDEILSDVASRLWFTYRRNFPAIGGTGPTSDTGWGCMLRCGQMIFAQALVCRHLGRDWRWTQRKRQPDSYFSVLNAFLDRKDSYYSIHQIAQMGVGEGKSIGQWYGPNTVAQVLKKLAVFDTWSSLAVHIAMDNTVVMEEIRRLCRASLPCAGAAALSMESERHCNGLPAGAEVTNRPLAWRPLVLLIPLRLGLTDINEAYVETLKHCFMMPQSLGVIGGKPNSAHYFIGYVGEELIYLDPHTTQPAVELTDSCFIPDESFHCQHPPCRMGIGELDPSIAVGFFCKTEEDFNDWCQQVKKLSQLGGALPMFELVEQQPSHLACQDVLNLSLDSSDVERLERFFDSEDEDFEILSL.

Residue M1 is modified to N-acetylmethionine. S34 is subject to Phosphoserine. Residue C74 is the Nucleophile of the active site. The residue at position 189 (C189) is an S-nitrosocysteine. Active-site residues include D278 and H280. An S-nitrosocysteine mark is found at C292 and C301. A disulfide bridge connects residues C292 and C361. Phosphoserine occurs at positions 316 and 383. The LIR signature appears at 388–391 (FEIL). A Phosphoserine modification is found at S392.

It belongs to the peptidase C54 family. In terms of assembly, interacts with PFKP; promoting phosphorylation of ATG4B at Ser-34. Interacts with GBP7. Post-translationally, phosphorylation at Ser-383 and Ser-392 promotes autophagy by increasing protein delipidation activity without affecting proteolytic activation of ATG8 proteins. Phosphorylation at Ser-316 by ULK1 inhibits autophagy by decreasing both proteolytic activation and delipidation activities. Phosphorylation at Ser-316 is dephosphorylated by protein phosphatase 2A (PP2A). Phosphorylation at Ser-34 by AKT2 promotes its hydrolase activity, leading to increased proteolytic activation and delipidation of ATG8 family proteins. Phosphorylation at Ser-34 by AKT1 promotes mitochondrial localization and inhibition of the F1F0-ATP synthase activity, leading to elevation of mitochondrial reactive oxygen species (ROS). In terms of processing, ubiquitinated by RNF5, leading to its degradation by the proteasome. S-nitrosylation in response to high glucose decreases both proteolytic activation and delipidation activities. Post-translationally, O-glycosylated by OGT, leading to increase protease activity, thereby promoting the proteolytic activation of ATG8 family proteins. In terms of processing, forms reversible intrachain disulfide bonds in response to oxidative stress. Forms interchain disulfide bonds, leading to formation of homooligomers in response to oxidation.

Its subcellular location is the cytoplasm. It localises to the cytosol. It is found in the cytoplasmic vesicle. The protein resides in the autophagosome. The protein localises to the endoplasmic reticulum. Its subcellular location is the mitochondrion. It catalyses the reaction [protein]-C-terminal L-amino acid-glycyl-phosphatidylethanolamide + H2O = [protein]-C-terminal L-amino acid-glycine + a 1,2-diacyl-sn-glycero-3-phosphoethanolamine. It carries out the reaction [protein]-C-terminal L-amino acid-glycyl-phosphatidylserine + H2O = [protein]-C-terminal L-amino acid-glycine + a 1,2-diacyl-sn-glycero-3-phospho-L-serine. Inhibited by N-ethylmaleimide. Redox-regulated during autophagy since reducing conditions activate ATG4A whereas an oxidizing environment such as the presence of H(2)O(2) inhibits its activity. The cysteine protease activity compounds is inhibited by styrylquinoline compounds 4-28 and LV-320. Its function is as follows. Cysteine protease that plays a key role in autophagy by mediating both proteolytic activation and delipidation of ATG8 family proteins. Required for canonical autophagy (macroautophagy), non-canonical autophagy as well as for mitophagy. The protease activity is required for proteolytic activation of ATG8 family proteins: cleaves the C-terminal amino acid of ATG8 proteins MAP1LC3A, MAP1LC3B, MAP1LC3C, GABARAPL1, GABARAPL2 and GABARAP, to reveal a C-terminal glycine. Exposure of the glycine at the C-terminus is essential for ATG8 proteins conjugation to phosphatidylethanolamine (PE) and insertion to membranes, which is necessary for autophagy. Protease activity is also required to counteract formation of high-molecular weight conjugates of ATG8 proteins (ATG8ylation): acts as a deubiquitinating-like enzyme that removes ATG8 conjugated to other proteins, such as ATG3. In addition to the protease activity, also mediates delipidation of ATG8 family proteins. Catalyzes delipidation of PE-conjugated forms of ATG8 proteins during macroautophagy. Also involved in non-canonical autophagy, a parallel pathway involving conjugation of ATG8 proteins to single membranes at endolysosomal compartments, by catalyzing delipidation of ATG8 proteins conjugated to phosphatidylserine (PS). Compared to other members of the family (ATG4A, ATG4C or ATG4C), constitutes the major protein for proteolytic activation of ATG8 proteins, while it displays weaker delipidation activity than other ATG4 paralogs. Involved in phagophore growth during mitophagy independently of its protease activity and of ATG8 proteins: acts by regulating ATG9A trafficking to mitochondria and promoting phagophore-endoplasmic reticulum contacts during the lipid transfer phase of mitophagy. The protein is Cysteine protease ATG4B of Rattus norvegicus (Rat).